The sequence spans 383 residues: 3-ketosteroid-9-alpha-monooxygenase, oxygenase component (383 aa).

In terms of domain architecture, Rieske spans 24–126 (WHCLGPVKNF…TDVRGGLLFV (103 aa)). 4 residues coordinate [2Fe-2S] cluster: C65, H67, C84, and H87. Fe cation contacts are provided by N173, H179, H184, and D302.

As to quaternary structure, homotrimer. The two-component system 3-ketosteroid-9-alpha-monooxygenase is composed of an oxygenase component KshA and a reductase component KshB. The cofactor is [2Fe-2S] cluster. It depends on Fe cation as a cofactor.

The catalysed reaction is androsta-1,4-diene-3,17-dione + 2 reduced [2Fe-2S]-[ferredoxin] + O2 + 2 H(+) = 9alpha-hydroxyandrosta-1,4-diene-3,17-dione + 2 oxidized [2Fe-2S]-[ferredoxin] + H2O. The protein operates within lipid metabolism; steroid biosynthesis. Involved in the degradation of cholesterol. Catalyzes the introduction of a 9a-hydroxyl moiety into 1,4-androstadiene-3,17-dione (ADD) to yield the 9alpha-hydroxy-1,4-androstadiene-3,17-dione (9OHADD) intermediate which spontaneously form 3-hydroxy-9,10-seconandrost-1,3,5(10)-triene-9,17-dione (HSA) via the meta-cleavage of ring B with concomitant aromatization of ring A. This chain is 3-ketosteroid-9-alpha-monooxygenase, oxygenase component (kshA), found in Mycolicibacterium smegmatis (strain ATCC 700084 / mc(2)155) (Mycobacterium smegmatis).